A 135-amino-acid chain; its full sequence is Protein cornichon homolog 1 (135 aa).

3 helical membrane-spanning segments follow: residues 2 to 22 (VFVW…VIYQ), 51 to 71 (FVLQ…AMFL), and 111 to 131 (IVGL…TVLL).

The protein belongs to the cornichon family. As to quaternary structure, interacts with HKT1;3.

It localises to the endoplasmic reticulum membrane. The protein localises to the golgi apparatus membrane. Acts as a cargo receptor necessary for the transportation of the cation transporter HKT1;3 and possibly other secretory proteins from the endoplasmic reticulum (ER) in COPII-coated vesicles targeted to the Golgi apparatus. The protein is Protein cornichon homolog 1 of Oryza sativa subsp. japonica (Rice).